Here is a 450-residue protein sequence, read N- to C-terminus: Cytidylate cyclase (450 aa).

The Guanylate cyclase domain maps to 97 to 236 (VTMFVDIRKS…LPVDMTAKLQ (140 aa)). Residue phenylalanine 100 coordinates a ribonucleoside 5'-triphosphate. Residues aspartate 102, isoleucine 103, and aspartate 146 each coordinate Mn(2+). The interval 318 to 450 (PNQFNFECFV…YRNIIGVYIK (133 aa)) is AGS-C domain.

It belongs to the adenylyl cyclase class-4/guanylyl cyclase family. Pyrimidine cyclase subfamily. In terms of assembly, homodimer. Requires Mn(2+) as cofactor.

The protein resides in the cytoplasm. The enzyme catalyses CTP = 3',5'-cyclic CMP + diphosphate. Its activity is regulated as follows. In E.coli strain MG1655 transformed with both genes cCMP appears between 15 and 30 minutes after infection with phage T5 (at protein level). No cCMP accumulates in uninfected cells. Functionally, pycsar (pyrimidine cyclase system for antiphage resistance) provides immunity against bacteriophage. The pyrimidine cyclase (PycC) synthesizes cyclic nucleotides in response to infection; these serve as specific second messenger signals. The signal activates the adjacent effector, leading to bacterial cell death and abortive phage infection. A clade E Pycsar system. The pyrimidine cyclase gene of a two-gene Pycsar system, generates cyclic CMP (cCMP) from CTP in response to bacteriophage infection. Has little to no activity on ATP, GTP or UTP. Expression of this and adjacent effector EcPycTM (AC P0DV25) confers resistance to bacteriophage P1 and T5; expression of this gene alone does not confer resistance. When cells expressing the Pycsar system are infected by phage T5 at low multiplicity of infection (0.2 MOI) the culture survives, at 2.0 MOI bacteria enter growth arrest. The same cells enter growth arrest after exposure to 250 uM cCMP but not cUMP; thus the effector protein responds only to the cNMP produced by its cognate NTP cyclase. Some of the cells treated with cCMP have abnormal membrane protrusions. The polypeptide is Cytidylate cyclase (Escherichia coli).